Consider the following 120-residue polypeptide: Large ribosomal subunit protein uL18 (120 aa).

The protein belongs to the universal ribosomal protein uL18 family. Part of the 50S ribosomal subunit; part of the 5S rRNA/L5/L18/L25 subcomplex. Contacts the 5S and 23S rRNAs.

In terms of biological role, this is one of the proteins that bind and probably mediate the attachment of the 5S RNA into the large ribosomal subunit, where it forms part of the central protuberance. The sequence is that of Large ribosomal subunit protein uL18 from Azorhizobium caulinodans (strain ATCC 43989 / DSM 5975 / JCM 20966 / LMG 6465 / NBRC 14845 / NCIMB 13405 / ORS 571).